The chain runs to 1050 residues: Toluene efflux pump membrane transporter TtgB (1050 aa).

Transmembrane regions (helical) follow at residues 10–30, 339–359, 370–390, 393–413, 440–460, 472–492, 539–559, 871–891, 893–913, 923–943, 972–992, and 1004–1024; these read IFAWVIALVIMLVGALSILKL, GVIHTLIEAVVLVFLVMYLFL, MTVPVVLLGTFGILAAAGFSI, LTMFAMVLAIGLLVDDAIVVV, GALVGIALVLSAVLLPMAFFG, ITIVSAMGLSVLVALIFTPAL, VPFLLAYALIVVGMIWLFARI, MPALFALSVLFVFLCLAALYE, WSIPIAVVLVVPLGIIGALIA, VYFLVGLLTTIGLAAKNAILI, IIMTSLAFILGVVPLTIASGA, and VIGGMISATVLAIFWVPLFFV.

This sequence belongs to the resistance-nodulation-cell division (RND) (TC 2.A.6) family.

It localises to the cell inner membrane. Its function is as follows. The inner membrane transporter component of a constitutive organic solvent efflux system. Involved in export of toluene, styrene, m-xylene, propylbenzene and ethylbenzene. Also exports AMP and the antibiotics carbenicillin, nalidixic acid, chloramphenicol and tetracycline. This Pseudomonas putida (strain DOT-T1E) protein is Toluene efflux pump membrane transporter TtgB (ttgB).